Consider the following 514-residue polypeptide: MQNLPKWKIFLSIICTIFAVICALPNFTQVKSKYLPHDSVNLGLDLRGGAHLLLDVDFDTYLNDTMENLADTLRKSFREDKIGYKNLLVKQNNIQLELRSQEELKPLKRIISKIDPEINVEANDNRIKLSYSESRLSELLNKVVDQSIEIVRMRVDSTGTKEPILQKQGDRHILLQVPGEEDPTYLKNILGKTAKLIFHLVDENANVEEAVKGHVPMGSMLVQGDRMGYLVVKKKAILGGDSLTTAAASFDQNSQAVVSFSFNSLGSKLFGEVTKNNVGKHLAIVLDNKLLSAPTINQPIMGGSGIISGDFTVESANELALLLRAGSLPAPLKIIEERSIGPNLGADSIESGKKAGIIGFAAVCIFMVWSYGLLGLFANIALSLAMLYVLALLSLFQATLTLPGIAGIILTMGMAVDANVLIYERIKEELNKGTSNLYAIKTGFESAFATILDSNLTTLIVAFLLYIFGVGAIKGFAVALTIGIISSMFSAIIITKLLIDIWVKYFKPKKLGLV.

A run of 5 helical transmembrane segments spans residues 7-27 (WKIF…LPNF), 357-377 (IIGF…LGLF), 389-409 (VLAL…AGII), 448-470 (FATI…IFGV), and 482-502 (IGII…IDIW).

Belongs to the SecD/SecF family. SecD subfamily. As to quaternary structure, forms a complex with SecF. Part of the essential Sec protein translocation apparatus which comprises SecA, SecYEG and auxiliary proteins SecDF-YajC and YidC.

It is found in the cell inner membrane. Its function is as follows. Part of the Sec protein translocase complex. Interacts with the SecYEG preprotein conducting channel. SecDF uses the proton motive force (PMF) to complete protein translocation after the ATP-dependent function of SecA. This Rickettsia bellii (strain RML369-C) protein is Protein translocase subunit SecD.